We begin with the raw amino-acid sequence, 35 residues long: Photosystem II reaction center protein M (35 aa).

The helical transmembrane segment at Ile5–Leu25 threads the bilayer.

It belongs to the PsbM family. PSII is composed of 1 copy each of membrane proteins PsbA, PsbB, PsbC, PsbD, PsbE, PsbF, PsbH, PsbI, PsbJ, PsbK, PsbL, PsbM, PsbT, PsbX, PsbY, PsbZ, Psb30/Ycf12, at least 3 peripheral proteins of the oxygen-evolving complex and a large number of cofactors. It forms dimeric complexes.

It is found in the plastid. The protein resides in the chloroplast thylakoid membrane. One of the components of the core complex of photosystem II (PSII). PSII is a light-driven water:plastoquinone oxidoreductase that uses light energy to abstract electrons from H(2)O, generating O(2) and a proton gradient subsequently used for ATP formation. It consists of a core antenna complex that captures photons, and an electron transfer chain that converts photonic excitation into a charge separation. This subunit is found at the monomer-monomer interface. The sequence is that of Photosystem II reaction center protein M from Staurastrum punctulatum (Green alga).